A 735-amino-acid polypeptide reads, in one-letter code: 1,4-alpha-glucan branching enzyme GlgB 1 (735 aa).

The Nucleophile role is filled by Asp418. The active-site Proton donor is the Glu471.

This sequence belongs to the glycosyl hydrolase 13 family. GlgB subfamily. In terms of assembly, monomer.

The enzyme catalyses Transfers a segment of a (1-&gt;4)-alpha-D-glucan chain to a primary hydroxy group in a similar glucan chain.. It participates in glycan biosynthesis; glycogen biosynthesis. Catalyzes the formation of the alpha-1,6-glucosidic linkages in glycogen by scission of a 1,4-alpha-linked oligosaccharide from growing alpha-1,4-glucan chains and the subsequent attachment of the oligosaccharide to the alpha-1,6 position. The polypeptide is 1,4-alpha-glucan branching enzyme GlgB 1 (Rhizobium johnstonii (strain DSM 114642 / LMG 32736 / 3841) (Rhizobium leguminosarum bv. viciae)).